The chain runs to 216 residues: Phosphoenolpyruvate guanylyltransferase (216 aa).

Thr143, Gly159, and Ser162 together coordinate phosphoenolpyruvate.

The protein belongs to the CofC family.

It catalyses the reaction phosphoenolpyruvate + GTP + H(+) = enolpyruvoyl-2-diphospho-5'-guanosine + diphosphate. The protein operates within cofactor biosynthesis; coenzyme F420 biosynthesis. In terms of biological role, guanylyltransferase that catalyzes the activation of phosphoenolpyruvate (PEP) as enolpyruvoyl-2-diphospho-5'-guanosine, via the condensation of PEP with GTP. It is involved in the biosynthesis of coenzyme F420, a hydride carrier cofactor. This chain is Phosphoenolpyruvate guanylyltransferase, found in Streptomyces scabiei (strain 87.22).